Consider the following 565-residue polypeptide: Periplasmic trehalase (565 aa).

The signal sequence occupies residues Met1 to Ala30. Residues Arg152, Trp159–Asp160, Asn196, Arg205–Gln207, Arg277–Glu279, and Gly310 contribute to the substrate site. Active-site proton donor/acceptor residues include Asp312 and Glu496. Glu511 provides a ligand contact to substrate. The segment at Asp540–Pro565 is disordered. A compositionally biased stretch (polar residues) spans Thr548 to Pro565.

This sequence belongs to the glycosyl hydrolase 37 family. As to quaternary structure, monomer.

Its subcellular location is the periplasm. It catalyses the reaction alpha,alpha-trehalose + H2O = alpha-D-glucose + beta-D-glucose. Functionally, provides the cells with the ability to utilize trehalose at high osmolarity by splitting it into glucose molecules that can subsequently be taken up by the phosphotransferase-mediated uptake system. In Shigella flexneri serotype 5b (strain 8401), this protein is Periplasmic trehalase.